The following is a 207-amino-acid chain: Ras-related protein Rab7 (207 aa).

GTP is bound by residues 15–22, 63–67, and 125–128; these read GDSGVGKT, DTAGQ, and NKID. Residues C205 and C207 are each lipidated (S-geranylgeranyl cysteine). C207 is modified (cysteine methyl ester).

The protein belongs to the small GTPase superfamily. Rab family.

The protein localises to the cell membrane. In terms of biological role, protein transport. Probably involved in vesicular traffic. This is Ras-related protein Rab7 from Prunus armeniaca (Apricot).